Here is a 478-residue protein sequence, read N- to C-terminus: Glycogen synthase (478 aa).

Position 15 (Lys-15) interacts with ADP-alpha-D-glucose.

Belongs to the glycosyltransferase 1 family. Bacterial/plant glycogen synthase subfamily.

The catalysed reaction is [(1-&gt;4)-alpha-D-glucosyl](n) + ADP-alpha-D-glucose = [(1-&gt;4)-alpha-D-glucosyl](n+1) + ADP + H(+). The protein operates within glycan biosynthesis; glycogen biosynthesis. Synthesizes alpha-1,4-glucan chains using ADP-glucose. The chain is Glycogen synthase from Streptococcus uberis (strain ATCC BAA-854 / 0140J).